Consider the following 337-residue polypeptide: MKLSRLALLSVFALASAPSWAESVVTVYSIDGLHDGDNSWYQVQFDAFTKATGITVRYVEGGGGVVVERLAKERTNPQADVLVTAPPFIQRAAAEKLLANFNTDAASAIPDANNLYSPLVKNYLSFIYNSKLLKTAPASWQDLLDGKFKNKLQYSTPGQAADGTAVMLQAFHSFGSKDAGFAYLGKLQANNVGPSASTGKLTALVNKGEIYVANGDLQMNLAQMERNPNVKIFWPANDKGERSALAIPYVIGLVQGAPQSENGKKLINFLLSKEAQTRVSELSWGMPVRSDVTPSDEHYKAATAALEGVQSWQPNWDDVAVSLSADISRWHKVTESE.

An N-terminal signal peptide occupies residues 1–21 (MKLSRLALLSVFALASAPSWA).

The protein belongs to the bacterial solute-binding protein 1 family.

The protein resides in the periplasm. Probably part of the PhnSTUV complex (TC 3.A.1.11.5) involved in 2-aminoethylphosphonate import. This chain is Putative 2-aminoethylphosphonate-binding periplasmic protein (phnS), found in Salmonella paratyphi A (strain ATCC 9150 / SARB42).